The following is an 87-amino-acid chain: Putative acyl-CoA-binding protein (87 aa).

The 86-residue stretch at 1–86 (MSSTFEQAAA…VDELKTKYGM (86 aa)) folds into the ACB domain. Residues Lys-13, 28-32 (YALFK), Lys-50, Lys-54, and Tyr-73 contribute to the an acyl-CoA site.

It belongs to the ACBP family.

The protein localises to the cytoplasm. It localises to the nucleus. Binds medium- and long-chain acyl-CoA esters with very high affinity and may function as an intracellular carrier of acyl-CoA esters. May enhance the activity of the ceramide synthase complex. The chain is Putative acyl-CoA-binding protein from Schizosaccharomyces pombe (strain 972 / ATCC 24843) (Fission yeast).